The sequence spans 1113 residues: Antigenic protein P1 (1113 aa).

Residues Ile-7–Val-27 traverse the membrane as a helical segment. Residues Asn-121, Asn-207, Asn-225, Asn-233, Asn-274, Asn-533, Asn-576, Asn-622, Asn-675, Asn-679, Asn-730, Asn-753, Asn-880, Asn-899, Asn-907, Asn-972, and Asn-995 are each glycosylated (N-linked (GlcNAc...) asparagine). The 315-residue stretch at Val-159–Gly-473 folds into the Peptidase M60 domain. The 153-residue stretch at Leu-648–Lys-800 folds into the PA14 domain.

Its subcellular location is the membrane. This chain is Antigenic protein P1, found in Entamoeba histolytica (strain ATCC 30459 / HM-1:IMSS / ABRM).